A 210-amino-acid polypeptide reads, in one-letter code: Putative fructokinase-8 (210 aa).

The protein belongs to the carbohydrate kinase PfkB family.

It carries out the reaction D-fructose + ATP = D-fructose 6-phosphate + ADP + H(+). It functions in the pathway glycan biosynthesis; starch biosynthesis. May play an important role in maintaining the flux of carbon towards starch formation. This Arabidopsis thaliana (Mouse-ear cress) protein is Putative fructokinase-8.